Consider the following 475-residue polypeptide: Mitochondrial adenyl nucleotide antiporter SLC25A24 (475 aa).

The regulatory N-terminal domain stretch occupies residues 1–173 (MLRWLRAFVL…RFWKHSTGID (173 aa)). The Mitochondrial intermembrane segment spans residues 1-197 (MLRWLRAFVL…EKKSGQWWRQ (197 aa)). 4 consecutive EF-hand domains span residues 19 to 54 (EPPT…LGIP), 55 to 88 (LGQD…KDHE), 86 to 121 (DHEK…LGLH), and 122 to 157 (ISEK…NPVT). Residues Asp-32, Asn-34, Asp-36, Val-38, Glu-43, Asp-68, Asn-70, Asp-72, Lys-74, Glu-79, Asp-99, Asn-101, Asp-103, Lys-105, Glu-110, Asp-135, Asp-137, Thr-139, Thr-141, and Glu-146 each coordinate Ca(2+). A linker region region spans residues 159–168 (IEEIIRFWKH). A C-terminal transmembrane transporter domain region spans residues 174-475 (IGDSLTIPDE…MKQTLGVAQK (302 aa)). 3 Solcar repeats span residues 192–276 (GQWW…YKKL), 284–369 (LGTF…LKSY), and 381–469 (PGVM…MKQT). A helical transmembrane segment spans residues 198 to 215 (LLAGGVAGAVSRTSTAPL). Residues 216–250 (DRLKVMMQVHGSKSMNIFGGFRQMVKEGGIRSLWR) are Mitochondrial matrix-facing. The helical transmembrane segment at 251–270 (GNGTNVIKIAPETAVKFWAY) threads the bilayer. The Mitochondrial intermembrane segment spans residues 271 to 293 (EQYKKLLTEEGQKLGTFERFISG). The helical transmembrane segment at 294–307 (SMAGATAQTFIYPM) threads the bilayer. Over 308-343 (EVLKTRLAVAKTGQYSGIYGCAKKILKHEGFGAFYK) the chain is Mitochondrial matrix. The residue at position 318 (Lys-318) is an N6-acetyllysine; alternate. N6-succinyllysine; alternate is present on Lys-318. Position 334 is an N6-acetyllysine (Lys-334). A helical transmembrane segment spans residues 344 to 363 (GYIPNLLGIIPYAGIDLAVY). At 364–386 (ELLKSYWLDNFAKDSVNPGVMVL) the chain is on the mitochondrial intermembrane side. Residues 387 to 404 (LSCGALSSTCGQLASYPL) form a helical membrane-spanning segment. The Mitochondrial matrix segment spans residues 405-443 (ALVRTRMQAQATVEGAPQLSMVGLFQRIVSKEGVSGLYR). The residue at position 435 (Lys-435) is an N6-acetyllysine; alternate. Lys-435 is modified (N6-succinyllysine; alternate). A helical transmembrane segment spans residues 444–463 (GITPNFMKVLPAVGISYVVY). The Mitochondrial intermembrane segment spans residues 464 to 475 (ENMKQTLGVAQK).

It belongs to the mitochondrial carrier (TC 2.A.29) family. In terms of assembly, monomer.

It is found in the mitochondrion inner membrane. It carries out the reaction Mg(2+)(out) + phosphate(in) + ATP(out) = Mg(2+)(in) + phosphate(out) + ATP(in). The catalysed reaction is ADP(out) + phosphate(in) + H(+)(out) = ADP(in) + phosphate(out) + H(+)(in). The enzyme catalyses AMP(out) + phosphate(in) = AMP(in) + phosphate(out). It catalyses the reaction phosphate(in) + ATP(out) + 2 H(+)(out) = phosphate(out) + ATP(in) + 2 H(+)(in). It carries out the reaction dADP(in) + ADP(out) = dADP(out) + ADP(in). The catalysed reaction is Mg(2+)(in) + ADP(out) + ATP(in) + H(+)(out) = Mg(2+)(out) + ADP(in) + ATP(out) + H(+)(in). The enzyme catalyses ADP(out) + diphosphate(in) = ADP(in) + diphosphate(out). It catalyses the reaction dAMP(in) + ADP(out) + H(+)(out) = dAMP(out) + ADP(in) + H(+)(in). It carries out the reaction 3'-AMP(in) + ADP(out) + H(+)(out) = 3'-AMP(out) + ADP(in) + H(+)(in). The catalysed reaction is dAMP(out) + phosphate(in) = dAMP(in) + phosphate(out). The enzyme catalyses 3'-AMP(out) + phosphate(in) = 3'-AMP(in) + phosphate(out). It catalyses the reaction dADP(out) + phosphate(in) + H(+)(out) = dADP(in) + phosphate(out) + H(+)(in). With respect to regulation, activated by an increase in cytosolic calcium levels that induce a conformational change of the N-terminal regulatory domain, uncapping the channel and allowing transport. Inhibited by bathophenanthroline, mersalyl, p-hydroxymercuribenzoate, bromcresol purple and tannic acid. Functionally, electroneutral antiporter that mediates the transport of adenyl nucleotides through the inner mitochondrial membrane. Originally identified as an ATP-magnesium/inorganic phosphate antiporter, it also acts as a broad specificity adenyl nucleotide antiporter. By regulating the mitochondrial matrix adenyl nucleotide pool could adapt to changing cellular energetic demands and indirectly regulate adenyl nucleotide-dependent metabolic pathways. In vitro, a low activity is also observed with guanyl and pyrimidine nucleotides. May play a role in protecting cells against oxidative stress-induced cell death, by buffering calcium levels in the mitochondrial matrix through the formation of calcium-phosphate precipitates. The sequence is that of Mitochondrial adenyl nucleotide antiporter SLC25A24 from Mus musculus (Mouse).